The primary structure comprises 156 residues: Protein-export protein SecB (156 aa).

This sequence belongs to the SecB family. Homotetramer, a dimer of dimers. One homotetramer interacts with 1 SecA dimer.

The protein resides in the cytoplasm. Its function is as follows. One of the proteins required for the normal export of preproteins out of the cell cytoplasm. It is a molecular chaperone that binds to a subset of precursor proteins, maintaining them in a translocation-competent state. It also specifically binds to its receptor SecA. This chain is Protein-export protein SecB, found in Aeromonas hydrophila subsp. hydrophila (strain ATCC 7966 / DSM 30187 / BCRC 13018 / CCUG 14551 / JCM 1027 / KCTC 2358 / NCIMB 9240 / NCTC 8049).